The chain runs to 210 residues: MDLHNIREDYSKRELSEADCADNPIEQFERWLDEAVRAQVNEPTAVNVAAVDGRGRPNSRMVLLKEVNSEGFVFFTNYHSRKGRSLDAHPFAAMTFFWPELERQVRVEGRVERLAEKLSDEYFESRPYQSRLGAWASAQSEVIPNKAVLVAKAAAVGLKHPLHVPRPPHWGGYIVIPDLLEFWQGRPSRLHDRIQYRLLDGGWIRERLSP.

Residues 7 to 10 (REDY) and Lys-65 contribute to the substrate site. FMN is bound by residues 60–65 (RMVLLK), 75–76 (FT), Arg-81, Lys-82, and Gln-104. Tyr-122, Arg-126, and Ser-130 together coordinate substrate. FMN-binding positions include 139 to 140 (QS) and Trp-183. 189 to 191 (RLH) is a binding site for substrate. Arg-193 provides a ligand contact to FMN.

The protein belongs to the pyridoxamine 5'-phosphate oxidase family. In terms of assembly, homodimer. FMN is required as a cofactor.

The catalysed reaction is pyridoxamine 5'-phosphate + O2 + H2O = pyridoxal 5'-phosphate + H2O2 + NH4(+). It carries out the reaction pyridoxine 5'-phosphate + O2 = pyridoxal 5'-phosphate + H2O2. Its pathway is cofactor metabolism; pyridoxal 5'-phosphate salvage; pyridoxal 5'-phosphate from pyridoxamine 5'-phosphate: step 1/1. It functions in the pathway cofactor metabolism; pyridoxal 5'-phosphate salvage; pyridoxal 5'-phosphate from pyridoxine 5'-phosphate: step 1/1. Functionally, catalyzes the oxidation of either pyridoxine 5'-phosphate (PNP) or pyridoxamine 5'-phosphate (PMP) into pyridoxal 5'-phosphate (PLP). The sequence is that of Pyridoxine/pyridoxamine 5'-phosphate oxidase from Neisseria meningitidis serogroup B (strain ATCC BAA-335 / MC58).